Here is a 483-residue protein sequence, read N- to C-terminus: Probable glycosyltransferase 6 (483 aa).

The Cytoplasmic segment spans residues 1–40 (MAASETAPFGVSAASKGGGGVAGARAQHGQLAVAGRVHDA). The chain crosses the membrane as a helical; Signal-anchor for type II membrane protein span at residues 41–61 (LVFAAGAVAAVLVLLATASFL). The Lumenal segment spans residues 62–483 (SPMPVTNLVA…PLPFDYPAAR (422 aa)). The N-linked (GlcNAc...) asparagine glycan is linked to Asn-144.

Belongs to the glycosyltransferase 34 family.

It localises to the golgi apparatus membrane. In terms of biological role, probable glycosyltransferase that may be involved in the biosynthesis of xyloglucan. The polypeptide is Probable glycosyltransferase 6 (Oryza sativa subsp. japonica (Rice)).